A 372-amino-acid polypeptide reads, in one-letter code: 4-hydroxy-3-methylbut-2-en-1-yl diphosphate synthase (flavodoxin) (372 aa).

4 residues coordinate [4Fe-4S] cluster: cysteine 270, cysteine 273, cysteine 305, and glutamate 312.

This sequence belongs to the IspG family. The cofactor is [4Fe-4S] cluster.

The enzyme catalyses (2E)-4-hydroxy-3-methylbut-2-enyl diphosphate + oxidized [flavodoxin] + H2O + 2 H(+) = 2-C-methyl-D-erythritol 2,4-cyclic diphosphate + reduced [flavodoxin]. The protein operates within isoprenoid biosynthesis; isopentenyl diphosphate biosynthesis via DXP pathway; isopentenyl diphosphate from 1-deoxy-D-xylulose 5-phosphate: step 5/6. In terms of biological role, converts 2C-methyl-D-erythritol 2,4-cyclodiphosphate (ME-2,4cPP) into 1-hydroxy-2-methyl-2-(E)-butenyl 4-diphosphate. This is 4-hydroxy-3-methylbut-2-en-1-yl diphosphate synthase (flavodoxin) from Enterobacter sp. (strain 638).